We begin with the raw amino-acid sequence, 255 residues long: Phosphatidylglycerol--prolipoprotein diacylglyceryl transferase (255 aa).

3 helical membrane passes run 15-35 (WYGIMIALGVLAALILANLNC), 46-66 (IDVFLISFPLAIIGARVYYVV), and 84-104 (LGGLAIHGGIIFGLGAAYIVS). Arg130 contacts a 1,2-diacyl-sn-glycero-3-phospho-(1'-sn-glycerol). A run of 3 helical transmembrane segments spans residues 169–189 (PTFLYESLWDLIVCIILVYIF), 196–216 (GTVICTYVGLYSLGRFFIEGL), and 228–248 (VAQLVSFIGIVLSISFFVYLK).

Belongs to the Lgt family.

It is found in the cell membrane. The enzyme catalyses L-cysteinyl-[prolipoprotein] + a 1,2-diacyl-sn-glycero-3-phospho-(1'-sn-glycerol) = an S-1,2-diacyl-sn-glyceryl-L-cysteinyl-[prolipoprotein] + sn-glycerol 1-phosphate + H(+). Its pathway is protein modification; lipoprotein biosynthesis (diacylglyceryl transfer). Its function is as follows. Catalyzes the transfer of the diacylglyceryl group from phosphatidylglycerol to the sulfhydryl group of the N-terminal cysteine of a prolipoprotein, the first step in the formation of mature lipoproteins. In Clostridium kluyveri (strain NBRC 12016), this protein is Phosphatidylglycerol--prolipoprotein diacylglyceryl transferase.